The following is a 204-amino-acid chain: Large ribosomal subunit protein uL4 (204 aa).

The segment at 48 to 75 (HTKGRSDVSGGGKKPWRQKGRGGARAGS) is disordered.

The protein belongs to the universal ribosomal protein uL4 family. In terms of assembly, part of the 50S ribosomal subunit.

One of the primary rRNA binding proteins, this protein initially binds near the 5'-end of the 23S rRNA. It is important during the early stages of 50S assembly. It makes multiple contacts with different domains of the 23S rRNA in the assembled 50S subunit and ribosome. Functionally, forms part of the polypeptide exit tunnel. The chain is Large ribosomal subunit protein uL4 from Campylobacter fetus subsp. fetus (strain 82-40).